A 204-amino-acid polypeptide reads, in one-letter code: Tat proofreading chaperone DmsD (204 aa).

This sequence belongs to the TorD/DmsD family. DmsD subfamily. Monomer in solution.

Functionally, required for biogenesis/assembly of DMSO reductase, but not for the interaction of the DmsA signal peptide with the Tat system. May be part of a chaperone cascade complex that facilitates a folding-maturation pathway for the substrate protein. In Salmonella typhimurium (strain LT2 / SGSC1412 / ATCC 700720), this protein is Tat proofreading chaperone DmsD.